A 289-amino-acid chain; its full sequence is Proteasome subunit beta (289 aa).

Positions methionine 1–alanine 55 are cleaved as a propeptide — removed in mature form; by autocatalysis. Threonine 56 (nucleophile) is an active-site residue.

The protein belongs to the peptidase T1B family. In terms of assembly, the 20S proteasome core is composed of 14 alpha and 14 beta subunits that assemble into four stacked heptameric rings, resulting in a barrel-shaped structure. The two inner rings, each composed of seven catalytic beta subunits, are sandwiched by two outer rings, each composed of seven alpha subunits. The catalytic chamber with the active sites is on the inside of the barrel. Has a gated structure, the ends of the cylinder being occluded by the N-termini of the alpha-subunits. Is capped by the proteasome-associated ATPase, ARC.

It localises to the cytoplasm. It carries out the reaction Cleavage of peptide bonds with very broad specificity.. It functions in the pathway protein degradation; proteasomal Pup-dependent pathway. With respect to regulation, the formation of the proteasomal ATPase ARC-20S proteasome complex, likely via the docking of the C-termini of ARC into the intersubunit pockets in the alpha-rings, may trigger opening of the gate for substrate entry. Interconversion between the open-gate and close-gate conformations leads to a dynamic regulation of the 20S proteasome proteolysis activity. Its function is as follows. Component of the proteasome core, a large protease complex with broad specificity involved in protein degradation. This chain is Proteasome subunit beta, found in Mycobacterium marinum (strain ATCC BAA-535 / M).